We begin with the raw amino-acid sequence, 485 residues long: Glutamyl-tRNA(Gln) amidotransferase subunit A (485 aa).

Catalysis depends on charge relay system residues Lys-78 and Ser-153. Ser-177 functions as the Acyl-ester intermediate in the catalytic mechanism.

This sequence belongs to the amidase family. GatA subfamily. In terms of assembly, heterotrimer of A, B and C subunits.

The catalysed reaction is L-glutamyl-tRNA(Gln) + L-glutamine + ATP + H2O = L-glutaminyl-tRNA(Gln) + L-glutamate + ADP + phosphate + H(+). Functionally, allows the formation of correctly charged Gln-tRNA(Gln) through the transamidation of misacylated Glu-tRNA(Gln) in organisms which lack glutaminyl-tRNA synthetase. The reaction takes place in the presence of glutamine and ATP through an activated gamma-phospho-Glu-tRNA(Gln). This Bacillus cereus (strain Q1) protein is Glutamyl-tRNA(Gln) amidotransferase subunit A.